A 441-amino-acid chain; its full sequence is Chromosome partition protein MukF (441 aa).

The interval 208–236 is leucine-zipper; sequence LDETSGNLRELQDTLNAAGDKLQAQLLRI.

It belongs to the MukF family. Interacts, and probably forms a ternary complex, with MukE and MukB via its C-terminal region. The complex formation is stimulated by calcium or magnesium. It is required for an interaction between MukE and MukB.

The protein resides in the cytoplasm. It is found in the nucleoid. Involved in chromosome condensation, segregation and cell cycle progression. May participate in facilitating chromosome segregation by condensation DNA from both sides of a centrally located replisome during cell division. Not required for mini-F plasmid partitioning. Probably acts via its interaction with MukB and MukE. Overexpression results in anucleate cells. It has a calcium binding activity. The chain is Chromosome partition protein MukF from Pasteurella multocida (strain Pm70).